The sequence spans 241 residues: Uridylate kinase (241 aa).

15–18 serves as a coordination point for ATP; sequence KMSG. The interval 23–28 is involved in allosteric activation by GTP; that stretch reads GAEGFG. G57 provides a ligand contact to UMP. Residues G58 and R62 each coordinate ATP. Residues D77 and 138-145 each bind UMP; that span reads TGNPLFTT. ATP-binding residues include T165, F171, and D174.

It belongs to the UMP kinase family. Homohexamer.

The protein localises to the cytoplasm. It carries out the reaction UMP + ATP = UDP + ADP. It participates in pyrimidine metabolism; CTP biosynthesis via de novo pathway; UDP from UMP (UMPK route): step 1/1. Its activity is regulated as follows. Allosterically activated by GTP. Inhibited by UTP. Its function is as follows. Catalyzes the reversible phosphorylation of UMP to UDP. This Blochmanniella pennsylvanica (strain BPEN) protein is Uridylate kinase.